A 327-amino-acid polypeptide reads, in one-letter code: GMP reductase (327 aa).

Catalysis depends on Cys175, which acts as the Thioimidate intermediate. 204 to 227 (IIADGGIRTNGDVAKSIRFGATMV) is a binding site for NADP(+).

The protein belongs to the IMPDH/GMPR family. GuaC type 2 subfamily.

The catalysed reaction is IMP + NH4(+) + NADP(+) = GMP + NADPH + 2 H(+). Functionally, catalyzes the irreversible NADPH-dependent deamination of GMP to IMP. It functions in the conversion of nucleobase, nucleoside and nucleotide derivatives of G to A nucleotides, and in maintaining the intracellular balance of A and G nucleotides. This chain is GMP reductase, found in Bacillus cereus (strain ZK / E33L).